Consider the following 60-residue polypeptide: Large ribosomal subunit protein eL37 (60 aa).

Residues cysteine 19, cysteine 22, cysteine 34, and cysteine 37 each contribute to the Zn(2+) site. The segment at cysteine 19–cysteine 37 adopts a C4-type zinc-finger fold.

The protein belongs to the eukaryotic ribosomal protein eL37 family. It depends on Zn(2+) as a cofactor.

In terms of biological role, binds to the 23S rRNA. The chain is Large ribosomal subunit protein eL37 from Methanosphaerula palustris (strain ATCC BAA-1556 / DSM 19958 / E1-9c).